The primary structure comprises 542 residues: Calcium-dependent protein kinase 15 (542 aa).

The interval 1-73 (MGARASRHRQ…QAPQQAAAED (73 aa)) is disordered. Glycine 2 is lipidated: N-myristoyl glycine. Low complexity predominate over residues 12-21 (PDQSQSQSPS). The segment covering 22-40 (PHHKHHHHHQTTRAPKPKP) has biased composition (basic residues). A compositionally biased stretch (pro residues) spans 41–60 (KPQPPPPQQPRSQPPPPPRH). Residues 61-71 (QPQQAPQQAAA) show a composition bias toward low complexity. Positions 90–348 (YTFGRELGRG…AAEILNHPWI (259 aa)) constitute a Protein kinase domain. ATP is bound by residues 96 to 104 (LGRGQFGVT) and lysine 119. The active-site Proton acceptor is aspartate 214. An autoinhibitory domain region spans residues 354-384 (APDKPLDITVISRMKQFRAMNKLKKVALKVV). 4 consecutive EF-hand domains span residues 391-426 (EEIVGLKEMFKSLDTDNSGTITLEELRAGLPKLGTK), 427-462 (ISESELRQLMEAADVDGNGSIDYVEFISATMHMNRL), 463-497 (EKEDHIYKAFEYFDKDHSGFITVDELEEALTKYDM), and 498-533 (GDEATIKEIIAEVDTDHDGRINYQEFVAMMKNNSPE). Ca(2+)-binding residues include aspartate 404, aspartate 406, serine 408, threonine 410, glutamate 415, aspartate 440, aspartate 442, asparagine 444, serine 446, glutamate 451, aspartate 476, aspartate 478, serine 480, glutamate 487, aspartate 511, aspartate 513, aspartate 515, arginine 517, and glutamate 522.

It belongs to the protein kinase superfamily. Ser/Thr protein kinase family. CDPK subfamily.

The protein resides in the membrane. It carries out the reaction L-seryl-[protein] + ATP = O-phospho-L-seryl-[protein] + ADP + H(+). It catalyses the reaction L-threonyl-[protein] + ATP = O-phospho-L-threonyl-[protein] + ADP + H(+). Activated by calcium. Autophosphorylation may play an important role in the regulation of the kinase activity. Its function is as follows. May play a role in signal transduction pathways that involve calcium as a second messenger. In Oryza sativa subsp. japonica (Rice), this protein is Calcium-dependent protein kinase 15.